An 85-amino-acid chain; its full sequence is Large ribosomal subunit protein bL27 (85 aa).

Positions 1-26 are disordered; the sequence is MAHKKAGGSTRNGRDSESKRLGVKRF.

It belongs to the bacterial ribosomal protein bL27 family.

This Saccharophagus degradans (strain 2-40 / ATCC 43961 / DSM 17024) protein is Large ribosomal subunit protein bL27.